We begin with the raw amino-acid sequence, 508 residues long: GMP synthase [glutamine-hydrolyzing] (508 aa).

A Glutamine amidotransferase type-1 domain is found at 1–189 (MIVVLDFGSQ…ALLVCGCEKT (189 aa)). Catalysis depends on C78, which acts as the Nucleophile. Residues H163 and E165 contribute to the active site. Residues 190-383 (WGMQNFAQKE…LGVSQDFLMR (194 aa)) enclose the GMPS ATP-PPase domain. 217 to 223 (SGGVDST) lines the ATP pocket.

As to quaternary structure, homodimer.

It carries out the reaction XMP + L-glutamine + ATP + H2O = GMP + L-glutamate + AMP + diphosphate + 2 H(+). It functions in the pathway purine metabolism; GMP biosynthesis; GMP from XMP (L-Gln route): step 1/1. Its function is as follows. Catalyzes the synthesis of GMP from XMP. In Helicobacter acinonychis (strain Sheeba), this protein is GMP synthase [glutamine-hydrolyzing].